A 240-amino-acid polypeptide reads, in one-letter code: UDP-2,3-diacylglucosamine hydrolase (240 aa).

Mn(2+) is bound by residues aspartate 9, histidine 11, aspartate 43, asparagine 81, and histidine 116. A substrate-binding site is contributed by 81-82 (NR). The substrate site is built by aspartate 124, serine 162, lysine 166, lysine 169, and histidine 197. Mn(2+) contacts are provided by histidine 197 and histidine 199.

The protein belongs to the LpxH family. The cofactor is Mn(2+).

Its subcellular location is the cell inner membrane. It carries out the reaction UDP-2-N,3-O-bis[(3R)-3-hydroxytetradecanoyl]-alpha-D-glucosamine + H2O = 2-N,3-O-bis[(3R)-3-hydroxytetradecanoyl]-alpha-D-glucosaminyl 1-phosphate + UMP + 2 H(+). Its pathway is glycolipid biosynthesis; lipid IV(A) biosynthesis; lipid IV(A) from (3R)-3-hydroxytetradecanoyl-[acyl-carrier-protein] and UDP-N-acetyl-alpha-D-glucosamine: step 4/6. Hydrolyzes the pyrophosphate bond of UDP-2,3-diacylglucosamine to yield 2,3-diacylglucosamine 1-phosphate (lipid X) and UMP by catalyzing the attack of water at the alpha-P atom. Involved in the biosynthesis of lipid A, a phosphorylated glycolipid that anchors the lipopolysaccharide to the outer membrane of the cell. This Neisseria meningitidis serogroup B (strain ATCC BAA-335 / MC58) protein is UDP-2,3-diacylglucosamine hydrolase.